A 1648-amino-acid polypeptide reads, in one-letter code: AT-rich interactive domain-containing protein arid-1 (1648 aa).

Disordered regions lie at residues Ile150–Asn270 and Arg284–Leu307. 3 stretches are compositionally biased toward acidic residues: residues Asp166–Glu193, Thr219–Ser228, and Ser251–Ala260. Polar residues predominate over residues Thr261 to Asn270. Residues Ala655–Thr745 enclose the ARID domain. Disordered regions lie at residues Val763 to Thr935, Ser1095 to Asp1563, and Lys1628 to Pro1648. A compositionally biased stretch (acidic residues) spans Ser848–Asp860. Composition is skewed to basic and acidic residues over residues His861 to Ser878 and Ser925 to Thr935. Composition is skewed to acidic residues over residues Asp1102 to Asp1112 and Gly1145 to Lys1154. Over residues Gln1165–Gly1185 the composition is skewed to low complexity. Over residues Tyr1195–Val1208 the composition is skewed to pro residues. Residues Phe1213 to Ser1251 show a composition bias toward polar residues. Over residues Arg1313–His1326 the composition is skewed to basic and acidic residues. Residues Ile1348–Ser1357 are compositionally biased toward polar residues. Positions Ala1377–Ser1392 are enriched in low complexity. Residues Ala1393–Pro1404 are compositionally biased toward pro residues. Low complexity-rich tracts occupy residues Ser1474 to Ile1486 and Thr1531 to Thr1541. The segment covering Arg1542–Asn1551 has biased composition (polar residues).

It localises to the nucleus. In terms of biological role, DNA-binding protein which modulates activity of several transcription factors. Plays a role in the modulation of endoplasmic reticulum (ER) homeostasis during chemical and pathogen stress, including exposure to the Gram-negative bacterium P.aeruginosa. The sequence is that of AT-rich interactive domain-containing protein arid-1 from Caenorhabditis elegans.